A 408-amino-acid polypeptide reads, in one-letter code: Broad specificity amino-acid racemase (408 aa).

A signal peptide spans 1–21; that stretch reads MHKKTLLATLILGLLAGQAVA. Residues Cys70 and Cys96 are joined by a disulfide bond. Lys74 acts as the Proton acceptor in catalysis. Lys74 is modified (N6-(pyridoxal phosphate)lysine). Residue Arg173 participates in substrate binding. Tyr300 acts as the Proton acceptor in catalysis. Met348 is a binding site for substrate.

Belongs to the alanine racemase family. Bsr subfamily. Homodimer. The cofactor is pyridoxal 5'-phosphate.

The protein resides in the periplasm. It carries out the reaction an L-alpha-amino acid = a D-alpha-amino acid. It catalyses the reaction L-lysine = D-lysine. The enzyme catalyses L-arginine = D-arginine. The catalysed reaction is L-alanine = D-alanine. It carries out the reaction L-serine = D-serine. It catalyses the reaction L-methionine = D-methionine. The enzyme catalyses L-leucine = D-leucine. The catalysed reaction is L-cysteine = D-cysteine. It carries out the reaction L-glutamine = D-glutamine. It catalyses the reaction L-asparagine = D-asparagine. The enzyme catalyses L-histidine = D-histidine. In terms of biological role, amino-acid racemase able to utilize a broad range of substrates. Reversibly racemizes ten of the 19 natural chiral amino acids known, including both non-beta-branched aliphatic amino acids (Ala, Leu, Met, Ser, Cys, Gln and Asn) and positively charged amino acids (His, Lys and Arg). Is not active on negatively charged (Glu and Asp) or aromatic (Tyr, Trp and Phe) amino acids and displays minimal activity towards beta-branched aliphatic (Ile, Val and Thr) substrates. Enables bacteria to produce and release extracellular non-canonical D-amino acids (NCDAAs) that regulate diverse cellular processes. The chain is Broad specificity amino-acid racemase from Aeromonas hydrophila subsp. hydrophila (strain ATCC 7966 / DSM 30187 / BCRC 13018 / CCUG 14551 / JCM 1027 / KCTC 2358 / NCIMB 9240 / NCTC 8049).